Consider the following 314-residue polypeptide: Ribosomal RNA small subunit methyltransferase H (314 aa).

Residues 35 to 37 (GGH), D55, F79, D101, and Q108 contribute to the S-adenosyl-L-methionine site. The segment at 276-296 (QGGQTLKPVGKKLMPSEAEVA) is disordered.

Belongs to the methyltransferase superfamily. RsmH family.

Its subcellular location is the cytoplasm. It carries out the reaction cytidine(1402) in 16S rRNA + S-adenosyl-L-methionine = N(4)-methylcytidine(1402) in 16S rRNA + S-adenosyl-L-homocysteine + H(+). Specifically methylates the N4 position of cytidine in position 1402 (C1402) of 16S rRNA. This is Ribosomal RNA small subunit methyltransferase H from Pectobacterium atrosepticum (strain SCRI 1043 / ATCC BAA-672) (Erwinia carotovora subsp. atroseptica).